The sequence spans 298 residues: Olfactory receptor 52Z1P (298 aa).

Over 1 to 14 the chain is Extracellular; that stretch reads MGIPGLEGLHTWIS. A helical membrane pass occupies residues 15 to 35; it reads IPFSFMYIVAVAGNIFLIFLI. At 36 to 43 the chain is on the cytoplasmic side; sequence MTERSLHE. The helical transmembrane segment at 44–64 threads the bilayer; that stretch reads PMYLFLSMLASADFLLATAAA. Topologically, residues 65 to 85 are extracellular; the sequence is PKVLAILWFHSMDISFGSCVS. C83 and C164 are oxidised to a cystine. The chain crosses the membrane as a helical span at residues 86 to 106; it reads QMFFIHFIFVAESAILLAMAF. Residues 107-128 lie on the Cytoplasmic side of the membrane; that stretch reads DRYVAICYPLRYTILTSSAVRK. A helical membrane pass occupies residues 129–149; the sequence is IGIAAVVRSFFICCPFIFLVY. Over 150–178 the chain is Extracellular; the sequence is RLTYCGRNIIPHSYCEHIARLACGNINVN. A helical membrane pass occupies residues 179-199; sequence IIYGLTVALLSTGLDIVLIII. The Cytoplasmic segment spans residues 200–223; sequence SYTMILHSVFQISSWAARFKALST. Residues 224–244 traverse the membrane as a helical segment; sequence CGSHICVIFMFYTPAFFSFLA. Topologically, residues 245–257 are extracellular; sequence HRFGGKTIPHHIH. A helical membrane pass occupies residues 258–278; it reads ILVGSLYVLVPPMLNPIIYGV. The Cytoplasmic segment spans residues 279 to 298; it reads KTKQIKDRVILLFSPISVCC.

Belongs to the G-protein coupled receptor 1 family.

The protein resides in the cell membrane. Functionally, odorant receptor. The protein is Olfactory receptor 52Z1P of Homo sapiens (Human).